Consider the following 744-residue polypeptide: Prestin (744 aa).

Over M1–K75 the chain is Cytoplasmic. Residues F76–L104 traverse the membrane as a helical segment. Residues A105–P108 are Extracellular-facing. A helical transmembrane segment spans residues P109–F126. Over G127 to F137 the chain is Cytoplasmic. Residues A138–V149 form a helical membrane-spanning segment. Residues R150–T168 are Extracellular-facing. Positions I158 to T168 match the Involved in motor function motif. N-linked (GlcNAc...) asparagine glycans are attached at residues N163 and N166. The chain crosses the membrane as a helical span at residues E169 to C196. The Cytoplasmic portion of the chain corresponds to R197–T206. The chain crosses the membrane as a helical span at residues E207–F230. Residues G231–F241 are Extracellular-facing. Residues S242–N253 constitute an intramembrane region (helical). The Extracellular portion of the chain corresponds to V254–N258. A helical membrane pass occupies residues V259–K276. Topologically, residues E277–P291 are cytoplasmic. Residues L292–F307 form a helical membrane-spanning segment. Over N308–D332 the chain is Extracellular. Residues T333–K359 form a helical membrane-spanning segment. Residues T360–D370 lie on the Cytoplasmic side of the membrane. Residues G371–F388 form a helical membrane-spanning segment. Residues Q389 to S396 lie on the Extracellular side of the membrane. Residues L397–T406 traverse the membrane as a helical segment. Salicylate is bound at residue S398. Residues G407 to T410 are Cytoplasmic-facing. A helical membrane pass occupies residues Q411–L431. Residues F432–P436 are Extracellular-facing. The chain crosses the membrane as a helical span at residues Q437 to T464. Position 465 (S465) is a topological domain, cytoplasmic. A helical transmembrane segment spans residues K466–F481. The Extracellular portion of the chain corresponds to L482–L484. A helical transmembrane segment spans residues D485–Q504. The segment at S505 to A718 is extended region for STAS domain. The Cytoplasmic portion of the chain corresponds to S505–A744. Positions A525–S713 constitute an STAS domain. Residues A720–A744 form a disordered region.

Belongs to the SLC26A/SulP transporter (TC 2.A.53) family. In terms of assembly, homodimer. Interacts (via STAS domain) with CALM; this interaction is calcium-dependent and the STAS domain interacts with only one lobe of CALM which is an elongated conformation. Interacts with MYH1. In terms of tissue distribution, specifically expressed in outer hair cells of cochleae (at protein level). Not detected in other cells of the organ of Corti.

It is found in the lateral cell membrane. The enzyme catalyses 2 hydrogencarbonate(in) + chloride(out) = 2 hydrogencarbonate(out) + chloride(in). Salicylate, an inhibitor of outer hair cell motility, acts as a competitive antagonist at the prestin anion-binding site. Functionally, voltage-sensitive motor protein that drives outer hair cell (OHC) electromotility (eM) and participates in sound amplification in the hearing organ. Converts changes in the transmembrane electric potential into mechanical displacements resulting in the coupling of its expansion to movement of a charged voltage sensor across the lipid membrane. The nature of the voltage sensor is not completely clear, and two models compete. In the first model, acts as an incomplete transporter where intracellular chloride anion acts as extrinsic voltage sensor that drives conformational change in the protein which is sufficient to produce a length change in the plane of the membrane and hence in the length of the OHC. The second model in which multiple charged amino acid residues are distributed at the intracellular and extracellular membrane interfaces that form an intrinsic voltage sensor, whose movement produces the non-linear capacitance (NLC). However, the effective voltage sensor may be the result of a hybrid voltage sensor assembled from intrinsic charge (charged residues) and extrinsic charge (bound anion). Notably, binding of anions to the anion-binding pocket partially neutralizes the intrinsic positive charge rather than to form an electrically negative sensor, therefore remaining charge may serve as voltage sensor that, after depolarization, moves from down (expanded state) to up (contracted) conformation, which is accompanied by an eccentric contraction of the intermembrane cross-sectional area of the protein as well as a major increase in the hydrophobic thickness of the protein having as consequences the plasma membrane thickening and the cell contraction after membrane depolarization. The anion-binding pocket transits from the inward-open (Down) state, where it is exposed toward the intracellular solvent in the absence of anion, to the occluded (Up) state upon anion binding. Salicylate competes for the anion-binding site and inhibits the voltage-sensor movement, and therefore inhibits the charge transfer and electromotility by displacing Cl(-) from the anion-binding site and by preventing the structural transitions to the contracted state. In addition, can act as a weak Cl(-)/HCO3(-) antiporter across the cell membrane and so regulate the intracellular pH of the outer hair cells (OHCs), while firstly found as being unable to mediate electrogenic anion transport. Moreover, supports a role in cardiac mechanical amplification serving as an elastic element to enhance the actomyosin- based sarcomere contraction system. The sequence is that of Prestin from Rattus norvegicus (Rat).